Here is a 119-residue protein sequence, read N- to C-terminus: Protein MGF 110-11L (119 aa).

An N-terminal signal peptide occupies residues 1-17; sequence MKVLLGLLLGYSVLILA.

This sequence belongs to the asfivirus MGF 110 family.

The protein is Protein MGF 110-11L of Ornithodoros (relapsing fever ticks).